Consider the following 311-residue polypeptide: Olfactory receptor 2Y1 (311 aa).

Residues M1–P25 lie on the Extracellular side of the membrane. A glycan (N-linked (GlcNAc...) asparagine) is linked at N5. The chain crosses the membrane as a helical span at residues I26–S49. Residues W50–T57 lie on the Cytoplasmic side of the membrane. The chain crosses the membrane as a helical span at residues P58 to P79. The Extracellular portion of the chain corresponds to Q80–Q100. C97 and C188 are disulfide-bonded. Residues L101–F120 form a helical membrane-spanning segment. Residues D121–H139 lie on the Cytoplasmic side of the membrane. Residues L140–I158 form a helical membrane-spanning segment. The Extracellular portion of the chain corresponds to Q159–T194. Residues E195–V218 traverse the membrane as a helical segment. The Cytoplasmic segment spans residues H219–K235. The chain crosses the membrane as a helical span at residues A236–Y258. At L259 to K271 the chain is on the extracellular side. N264 carries N-linked (GlcNAc...) asparagine glycosylation. A helical transmembrane segment spans residues F272 to L291. Residues R292–G311 lie on the Cytoplasmic side of the membrane.

Belongs to the G-protein coupled receptor 1 family.

It is found in the cell membrane. In terms of biological role, odorant receptor. The chain is Olfactory receptor 2Y1 (OR2Y1) from Homo sapiens (Human).